Here is a 114-residue protein sequence, read N- to C-terminus: FK506-binding protein 1 (114 aa).

Position 2 is an N-acetylserine (serine 2). In terms of domain architecture, PPIase FKBP-type spans glycine 26–asparagine 114. Serine 51 is subject to Phosphoserine.

Belongs to the FKBP-type PPIase family. FKBP1 subfamily. As to quaternary structure, interacts with HOM3; the interaction is direct, plays a role in feedback inhibition of aspartokinase by threonine, and is inhibited by tacrolimus and sirolimus. Interacts with HMO1. Interacts with FAP1.

The protein resides in the cytoplasm. Its subcellular location is the mitochondrion. It catalyses the reaction [protein]-peptidylproline (omega=180) = [protein]-peptidylproline (omega=0). Functionally, PPIases accelerate the folding of proteins. It catalyzes the cis-trans isomerization of proline imidic peptide bonds in oligopeptides. Plays a role in feedback inhibition of the pathway synthesizing the aspartate family of amino acids by binding to aspartokinase. The protein is FK506-binding protein 1 (FPR1) of Saccharomyces cerevisiae (strain ATCC 204508 / S288c) (Baker's yeast).